A 201-amino-acid polypeptide reads, in one-letter code: MSSNDQQRGGVADKALQLVMEMKRNPDVLPPYNADLVRQCQKKIDELFHKNAAVVERMRNGLEHDPSLLQPRLAAMCHIRRCMMAYVNERKNRIRSFRWRYGGALPASVRNALCEAEIQFFNEYSSTLARFQSNLGEAGVNLLLHTAPPKTLFVQVRTLEDYGEFETSDGTQVQLTKDSLHSLPRQDCEMLIRQGVLELVH.

The protein belongs to the GINS1/PSF1 family. As to quaternary structure, component of the GINS complex which is a heterotetramer of gins1, gins2, gins3 and gins4.

The protein localises to the nucleus. Its function is as follows. The GINS complex plays an essential role in the initiation of DNA replication. This chain is Probable DNA replication complex GINS protein PSF1, found in Caenorhabditis briggsae.